Consider the following 731-residue polypeptide: T-cell activation Rho GTPase-activating protein (731 aa).

Residues 88-277 (QPLSIICGDS…FLIDNCFEIF (190 aa)) form the Rho-GAP domain. 3 disordered regions span residues 288-421 (TSDD…AEDP), 464-507 (SLDA…IKKH), and 641-662 (HHVE…GLSP). The span at 299–311 (SDVSTLQNDSAYD) shows a compositional bias: polar residues. The segment covering 319–329 (SNSSSGISSPS) has biased composition (low complexity). The segment covering 380–399 (SMPSSQECLESRVTNQTLTK) has biased composition (polar residues). Residue Ser400 is modified to Phosphoserine. Residues 464–480 (SLDASSDSSPVASPSSP) show a composition bias toward low complexity. Basic and acidic residues-rich tracts occupy residues 494–503 (KTEKGKPSRE) and 641–652 (HHVEDSRHRGSK).

May function as a GTPase-activating protein and may play important roles during T-cell activation. The sequence is that of T-cell activation Rho GTPase-activating protein (TAGAP) from Homo sapiens (Human).